We begin with the raw amino-acid sequence, 709 residues long: Molybdenum cofactor sulfurase (709 aa).

Position 208 is an N6-(pyridoxal phosphate)lysine (Lys-208). Residue Cys-367 is part of the active site. Residues Asp-563–Ser-707 enclose the MOSC domain.

This sequence belongs to the class-V pyridoxal-phosphate-dependent aminotransferase family. MOCOS subfamily. It depends on pyridoxal 5'-phosphate as a cofactor.

The catalysed reaction is Mo-molybdopterin + L-cysteine + AH2 = thio-Mo-molybdopterin + L-alanine + A + H2O. The protein operates within cofactor biosynthesis; molybdopterin biosynthesis. Sulfurates the molybdenum cofactor. Sulfation of molybdenum is essential for xanthine dehydrogenase (XDH) and aldehyde oxidase (ADO) enzymes in which molybdenum cofactor is liganded by 1 oxygen and 1 sulfur atom in active form. In Caenorhabditis elegans, this protein is Molybdenum cofactor sulfurase.